A 198-amino-acid polypeptide reads, in one-letter code: Recombination protein RecR (198 aa).

The C4-type zinc-finger motif lies at 58–73 (CKVCQTLTDKEICPIC). The Toprim domain occupies 81 to 175 (KVIMVVENTR…KVSRIASGVP (95 aa)).

This sequence belongs to the RecR family.

In terms of biological role, may play a role in DNA repair. It seems to be involved in an RecBC-independent recombinational process of DNA repair. It may act with RecF and RecO. The sequence is that of Recombination protein RecR from Lachnoclostridium phytofermentans (strain ATCC 700394 / DSM 18823 / ISDg) (Clostridium phytofermentans).